A 911-amino-acid polypeptide reads, in one-letter code: Probable dipeptidyl-aminopeptidase B (911 aa).

A disordered region spans residues 1–39 (MPRPRAAKEEETELLAQHQESPRPSSDGSEASASSISTT). The Cytoplasmic portion of the chain corresponds to 1–97 (MPRPRAAKEE…TPVDKKARRT (97 aa)). Residues 25–39 (SSDGSEASASSISTT) show a composition bias toward low complexity. A helical; Signal-anchor for type II membrane protein membrane pass occupies residues 98-118 (LWIVGTICAVGWALALVSFLM). The Vacuolar portion of the chain corresponds to 119–911 (NGNYKHSSTR…AQADARSLGR (793 aa)). N-linked (GlcNAc...) asparagine glycans are attached at residues Asn-268 and Asn-564. Ser-755 acts as the Charge relay system in catalysis. The N-linked (GlcNAc...) asparagine glycan is linked to Asn-809. Residues Asp-832 and His-865 each act as charge relay system in the active site.

This sequence belongs to the peptidase S9B family.

It localises to the vacuole membrane. The enzyme catalyses Release of an N-terminal dipeptide, Xaa-Yaa-|-Zaa-, from a polypeptide, preferentially when Yaa is Pro, provided Zaa is neither Pro nor hydroxyproline.. Functionally, type IV dipeptidyl-peptidase which removes N-terminal dipeptides sequentially from polypeptides having unsubstituted N-termini provided that the penultimate residue is proline. This Phaeosphaeria nodorum (strain SN15 / ATCC MYA-4574 / FGSC 10173) (Glume blotch fungus) protein is Probable dipeptidyl-aminopeptidase B (DAPB).